A 95-amino-acid polypeptide reads, in one-letter code: Aspartyl/glutamyl-tRNA(Asn/Gln) amidotransferase subunit C (95 aa).

Belongs to the GatC family. Heterotrimer of A, B and C subunits.

It catalyses the reaction L-glutamyl-tRNA(Gln) + L-glutamine + ATP + H2O = L-glutaminyl-tRNA(Gln) + L-glutamate + ADP + phosphate + H(+). The catalysed reaction is L-aspartyl-tRNA(Asn) + L-glutamine + ATP + H2O = L-asparaginyl-tRNA(Asn) + L-glutamate + ADP + phosphate + 2 H(+). In terms of biological role, allows the formation of correctly charged Asn-tRNA(Asn) or Gln-tRNA(Gln) through the transamidation of misacylated Asp-tRNA(Asn) or Glu-tRNA(Gln) in organisms which lack either or both of asparaginyl-tRNA or glutaminyl-tRNA synthetases. The reaction takes place in the presence of glutamine and ATP through an activated phospho-Asp-tRNA(Asn) or phospho-Glu-tRNA(Gln). The polypeptide is Aspartyl/glutamyl-tRNA(Asn/Gln) amidotransferase subunit C (Beijerinckia indica subsp. indica (strain ATCC 9039 / DSM 1715 / NCIMB 8712)).